The primary structure comprises 910 residues: Putative coatomer subunit beta'-3 (910 aa).

WD repeat units lie at residues 13 to 52 (QRSE…MVKS), 55 to 94 (VTEL…KVKV), 97 to 136 (AHTD…MCTQ), 140 to 180 (GHSH…PNFT), 183 to 224 (GHSK…CVQT), 227 to 266 (GHAH…LENT), 269 to 309 (YGLE…ASMD), 351 to 393 (TCDL…GSAL), and 461 to 501 (RIDV…SHLD). Positions 865-884 (ENGVEESQEDAVEVDVEADG) are enriched in acidic residues. A disordered region spans residues 865-910 (ENGVEESQEDAVEVDVEADGSTDGTVLVNGNDTEEQWGTNNEESLA). Residues 886 to 910 (TDGTVLVNGNDTEEQWGTNNEESLA) show a composition bias toward polar residues.

This sequence belongs to the WD repeat COPB2 family. As to quaternary structure, oligomeric complex that consists of at least the alpha, beta, beta', gamma, delta, epsilon and zeta subunits.

The protein resides in the cytoplasm. The protein localises to the golgi apparatus membrane. It is found in the cytoplasmic vesicle. It localises to the COPI-coated vesicle membrane. In terms of biological role, the coatomer is a cytosolic protein complex that binds to dilysine motifs and reversibly associates with Golgi non-clathrin-coated vesicles, which further mediate biosynthetic protein transport from the ER, via the Golgi up to the trans Golgi network. Coatomer complex is required for budding from Golgi membranes, and is essential for the retrograde Golgi-to-ER transport of dilysine-tagged proteins. This is Putative coatomer subunit beta'-3 from Oryza sativa subsp. japonica (Rice).